The sequence spans 129 residues: DNA-directed RNA polymerase II subunit RPB9 (129 aa).

Zn(2+)-binding residues include Cys21, Cys24, Cys43, Cys46, Cys90, Cys93, Cys118, and Cys123. A C4-type zinc finger spans residues 21–46; it reads CQECNNMLYPKEDKENKILLYACRNC. The segment at 86 to 128 adopts a TFIIS-type zinc-finger fold; that stretch reads EDHACPKCSHREAVFFQAQTRRAEEEMRLYYVCTNQNCTHRWT.

The protein belongs to the archaeal RpoM/eukaryotic RPA12/RPB9/RPC11 RNA polymerase family. Component of the RNA polymerase II (Pol II) complex consisting of 12 subunits.

The protein localises to the nucleus. It localises to the nucleolus. Its function is as follows. DNA-dependent RNA polymerase catalyzes the transcription of DNA into RNA using the four ribonucleoside triphosphates as substrates. Component of RNA polymerase II which synthesizes mRNA precursors and many functional non-coding RNAs. Pol II is the central component of the basal RNA polymerase II transcription machinery. It is composed of mobile elements that move relative to each other. RPB9 is part of the upper jaw surrounding the central large cleft and thought to grab the incoming DNA template. In Drosophila melanogaster (Fruit fly), this protein is DNA-directed RNA polymerase II subunit RPB9.